A 261-amino-acid chain; its full sequence is uncharacterized protein (261 aa).

The a divalent metal cation site is built by Asp43, His45, Asp75, Asn106, His197, and His199.

Belongs to the metallophosphoesterase superfamily. The cofactor is a divalent metal cation.

This is an uncharacterized protein from Aquifex aeolicus (strain VF5).